The primary structure comprises 950 residues: ABC transporter A family member 9 (950 aa).

6 helical membrane passes run 31 to 51 (ATCLHLFSSFFFILLIFSIEE), 223 to 243 (IISAFYLMGPVFFLAFSMFGF), 276 to 296 (WLIWEGILTFVSSLFLVLFGM), 308 to 328 (FVLVFLLFFLFQFNMIGLAFA), 342 to 362 (VGFLVFLVGFITQIVTTAGFP), and 426 to 446 (IWLVGTFFFWFVLALYFDNII). In terms of domain architecture, ABC transporter spans 520–765 (VQIHGLAKTY…FGTGFVATVS (246 aa)). 566-573 (GPNGAGKT) contributes to the ATP binding site.

Belongs to the ABC transporter superfamily. ABCA family. CPR flippase (TC 3.A.1.211) subfamily. In terms of tissue distribution, highly expressed in siliques. Detected in seedlings, rosette leaves, stems and flowers.

The protein localises to the endoplasmic reticulum membrane. Mediates the transport of acyl-CoAs and/or free fatty acids to the endoplasmic reticulum. Has no effect on the selectivity of fatty acid incorporation into triacylglycerol or further desaturation steps. The sequence is that of ABC transporter A family member 9 (ABCA9) from Arabidopsis thaliana (Mouse-ear cress).